The following is a 268-amino-acid chain: tRNA pseudouridine synthase A (268 aa).

Asp-54 serves as the catalytic Nucleophile. Substrate is bound at residue Tyr-112.

This sequence belongs to the tRNA pseudouridine synthase TruA family. In terms of assembly, homodimer.

It carries out the reaction uridine(38/39/40) in tRNA = pseudouridine(38/39/40) in tRNA. Functionally, formation of pseudouridine at positions 38, 39 and 40 in the anticodon stem and loop of transfer RNAs. This is tRNA pseudouridine synthase A from Bordetella petrii (strain ATCC BAA-461 / DSM 12804 / CCUG 43448).